The following is a 756-amino-acid chain: Photosystem I P700 chlorophyll a apoprotein A1 (756 aa).

The next 8 membrane-spanning stretches (helical) occupy residues 73–96 (IFSA…FHGA), 159–182 (LYVT…FHYH), 198–222 (MNHH…HVSL), 298–316 (TAHH…GHMY), 353–376 (WHAQ…HHMY), 392–418 (LSLF…IYMV), 440–462 (AIIS…LYIH), and 537–555 (FLVH…LILL). [4Fe-4S] cluster-binding residues include cysteine 579 and cysteine 588. 2 helical membrane passes run 595 to 616 (HVFL…HFSW) and 670 to 692 (LSAY…MFLF). Histidine 681 provides a ligand contact to chlorophyll a'. Chlorophyll a is bound by residues methionine 689 and tyrosine 697. Residue tryptophan 698 participates in phylloquinone binding. Residues 730 to 750 (AVGVAHYLLGGIATTWAFFLA) form a helical membrane-spanning segment.

Belongs to the PsaA/PsaB family. In terms of assembly, the PsaA/B heterodimer binds the P700 chlorophyll special pair and subsequent electron acceptors. PSI consists of a core antenna complex that captures photons, and an electron transfer chain that converts photonic excitation into a charge separation. The cyanobacterial PSI reaction center is composed of one copy each of PsaA,B,C,D,E,F,I,J,K,L,M and X, and forms trimeric complexes. Requires PSI electron transfer chain: 5 chlorophyll a, 1 chlorophyll a', 2 phylloquinones and 3 4Fe-4S clusters. PSI core antenna: 90 chlorophyll a, 22 carotenoids, 3 phospholipids and 1 galactolipid. P700 is a chlorophyll a/chlorophyll a' dimer, A0 is one or more chlorophyll a, A1 is one or both phylloquinones and FX is a shared 4Fe-4S iron-sulfur center. as cofactor.

The protein localises to the cellular thylakoid membrane. The enzyme catalyses reduced [plastocyanin] + hnu + oxidized [2Fe-2S]-[ferredoxin] = oxidized [plastocyanin] + reduced [2Fe-2S]-[ferredoxin]. Its function is as follows. PsaA and PsaB bind P700, the primary electron donor of photosystem I (PSI), as well as the electron acceptors A0, A1 and FX. PSI is a plastocyanin/cytochrome c6-ferredoxin oxidoreductase, converting photonic excitation into a charge separation, which transfers an electron from the donor P700 chlorophyll pair to the spectroscopically characterized acceptors A0, A1, FX, FA and FB in turn. Oxidized P700 is reduced on the lumenal side of the thylakoid membrane by plastocyanin or cytochrome c6. In Cyanothece sp. (strain PCC 7425 / ATCC 29141), this protein is Photosystem I P700 chlorophyll a apoprotein A1.